The primary structure comprises 111 residues: Iron-sulfur cluster assembly protein CyaY (111 aa).

This sequence belongs to the frataxin family.

Its function is as follows. Involved in iron-sulfur (Fe-S) cluster assembly. May act as a regulator of Fe-S biogenesis. The sequence is that of Iron-sulfur cluster assembly protein CyaY from Cupriavidus taiwanensis (strain DSM 17343 / BCRC 17206 / CCUG 44338 / CIP 107171 / LMG 19424 / R1) (Ralstonia taiwanensis (strain LMG 19424)).